The following is a 185-amino-acid chain: Ribosome-recycling factor (185 aa).

The protein belongs to the RRF family.

The protein resides in the cytoplasm. Responsible for the release of ribosomes from messenger RNA at the termination of protein biosynthesis. May increase the efficiency of translation by recycling ribosomes from one round of translation to another. The polypeptide is Ribosome-recycling factor (Enterococcus faecalis (strain ATCC 700802 / V583)).